The following is a 153-amino-acid chain: 6,7-dimethyl-8-ribityllumazine synthase (153 aa).

5-amino-6-(D-ribitylamino)uracil-binding positions include Phe22, Ala56–Glu58, and Thr80–Ile82. Residue Ser85–Thr86 participates in (2S)-2-hydroxy-3-oxobutyl phosphate binding. His88 (proton donor) is an active-site residue. Phe113 lines the 5-amino-6-(D-ribitylamino)uracil pocket. (2S)-2-hydroxy-3-oxobutyl phosphate is bound at residue Arg127.

It belongs to the DMRL synthase family. As to quaternary structure, forms an icosahedral capsid composed of 60 subunits, arranged as a dodecamer of pentamers.

The enzyme catalyses (2S)-2-hydroxy-3-oxobutyl phosphate + 5-amino-6-(D-ribitylamino)uracil = 6,7-dimethyl-8-(1-D-ribityl)lumazine + phosphate + 2 H2O + H(+). Its pathway is cofactor biosynthesis; riboflavin biosynthesis; riboflavin from 2-hydroxy-3-oxobutyl phosphate and 5-amino-6-(D-ribitylamino)uracil: step 1/2. Functionally, catalyzes the formation of 6,7-dimethyl-8-ribityllumazine by condensation of 5-amino-6-(D-ribitylamino)uracil with 3,4-dihydroxy-2-butanone 4-phosphate. This is the penultimate step in the biosynthesis of riboflavin. The protein is 6,7-dimethyl-8-ribityllumazine synthase of Actinobacillus pleuropneumoniae serotype 5b (strain L20).